A 135-amino-acid chain; its full sequence is Protein NrdI (135 aa).

The protein belongs to the NrdI family.

Probably involved in ribonucleotide reductase function. This is Protein NrdI from Salmonella gallinarum (strain 287/91 / NCTC 13346).